Reading from the N-terminus, the 75-residue chain is Translational regulator CsrA (75 aa).

It belongs to the CsrA/RsmA family. In terms of assembly, homodimer; the beta-strands of each monomer intercalate to form a hydrophobic core, while the alpha-helices form wings that extend away from the core.

The protein resides in the cytoplasm. A translational regulator that binds mRNA to regulate translation initiation and/or mRNA stability. Usually binds in the 5'-UTR at or near the Shine-Dalgarno sequence preventing ribosome-binding, thus repressing translation. Its main target seems to be the major flagellin gene, while its function is anatagonized by FliW. The sequence is that of Translational regulator CsrA from Exiguobacterium sibiricum (strain DSM 17290 / CCUG 55495 / CIP 109462 / JCM 13490 / 255-15).